Reading from the N-terminus, the 232-residue chain is Golgi SNAP receptor complex member 1 (232 aa).

Residues 1–211 (MGGSSYDVLR…QRINIKKRRD (211 aa)) lie on the Cytoplasmic side of the membrane. Coiled-coil stretches lie at residues 6–23 (YDVL…IDLK) and 52–80 (GEHV…MSDL). A helical; Anchor for type IV membrane protein membrane pass occupies residues 212–232 (SLILGAVIGFCVILLLLYAFN).

This sequence belongs to the GOSR1 family. In terms of assembly, component of several multiprotein Golgi SNARE complexes.

It is found in the golgi apparatus membrane. Involved in transport from the ER to the Golgi apparatus as well as in intra-Golgi transport. It belongs to a super-family of proteins called t-SNAREs or soluble NSF (N-ethylmaleimide-sensitive factor) attachment protein receptor. This Drosophila melanogaster (Fruit fly) protein is Golgi SNAP receptor complex member 1 (Gos28).